A 130-amino-acid polypeptide reads, in one-letter code: Small ribosomal subunit protein uS9 (130 aa).

It belongs to the universal ribosomal protein uS9 family.

The sequence is that of Small ribosomal subunit protein uS9 from Paracidovorax citrulli (strain AAC00-1) (Acidovorax citrulli).